A 398-amino-acid polypeptide reads, in one-letter code: 4-hydroxy-3-methylbut-2-en-1-yl diphosphate synthase (ferredoxin) (398 aa).

[4Fe-4S] cluster-binding residues include C306, C309, C340, and E347.

This sequence belongs to the IspG family. The cofactor is [4Fe-4S] cluster.

It carries out the reaction (2E)-4-hydroxy-3-methylbut-2-enyl diphosphate + 2 oxidized [2Fe-2S]-[ferredoxin] + H2O = 2-C-methyl-D-erythritol 2,4-cyclic diphosphate + 2 reduced [2Fe-2S]-[ferredoxin] + H(+). It functions in the pathway isoprenoid biosynthesis; isopentenyl diphosphate biosynthesis via DXP pathway; isopentenyl diphosphate from 1-deoxy-D-xylulose 5-phosphate: step 5/6. Functionally, converts 2C-methyl-D-erythritol 2,4-cyclodiphosphate (ME-2,4cPP) into 1-hydroxy-2-methyl-2-(E)-butenyl 4-diphosphate. The polypeptide is 4-hydroxy-3-methylbut-2-en-1-yl diphosphate synthase (ferredoxin) (Synechococcus sp. (strain CC9311)).